The chain runs to 477 residues: Probable cytosolic Fe-S cluster assembly factor GM20417 (477 aa).

[4Fe-4S] cluster contacts are provided by C23, C68, C71, C74, C187, C243, C395, and C399.

Belongs to the NARF family.

Its function is as follows. Component of the cytosolic iron-sulfur (Fe/S) protein assembly machinery. Required for maturation of extramitochondrial Fe/S proteins. The protein is Probable cytosolic Fe-S cluster assembly factor GM20417 of Drosophila sechellia (Fruit fly).